The following is a 379-amino-acid chain: Queuine tRNA-ribosyltransferase (379 aa).

Residue Asp94 is the Proton acceptor of the active site. Substrate is bound by residues 94 to 98, Asp148, Gln191, and Gly218; that span reads DSGGF. An RNA binding region spans residues 249–255; the sequence is GVGSPDS. The Nucleophile role is filled by Asp268. Positions 273–277 are RNA binding; important for wobble base 34 recognition; that stretch reads TRIAR. Residues Cys306, Cys308, Cys311, and His337 each contribute to the Zn(2+) site.

This sequence belongs to the queuine tRNA-ribosyltransferase family. As to quaternary structure, homodimer. Within each dimer, one monomer is responsible for RNA recognition and catalysis, while the other monomer binds to the replacement base PreQ1. It depends on Zn(2+) as a cofactor.

It catalyses the reaction 7-aminomethyl-7-carbaguanine + guanosine(34) in tRNA = 7-aminomethyl-7-carbaguanosine(34) in tRNA + guanine. It functions in the pathway tRNA modification; tRNA-queuosine biosynthesis. In terms of biological role, catalyzes the base-exchange of a guanine (G) residue with the queuine precursor 7-aminomethyl-7-deazaguanine (PreQ1) at position 34 (anticodon wobble position) in tRNAs with GU(N) anticodons (tRNA-Asp, -Asn, -His and -Tyr). Catalysis occurs through a double-displacement mechanism. The nucleophile active site attacks the C1' of nucleotide 34 to detach the guanine base from the RNA, forming a covalent enzyme-RNA intermediate. The proton acceptor active site deprotonates the incoming PreQ1, allowing a nucleophilic attack on the C1' of the ribose to form the product. After dissociation, two additional enzymatic reactions on the tRNA convert PreQ1 to queuine (Q), resulting in the hypermodified nucleoside queuosine (7-(((4,5-cis-dihydroxy-2-cyclopenten-1-yl)amino)methyl)-7-deazaguanosine). This Listeria monocytogenes serovar 1/2a (strain ATCC BAA-679 / EGD-e) protein is Queuine tRNA-ribosyltransferase.